The primary structure comprises 486 residues: Aromatic-L-amino-acid decarboxylase (486 aa).

Methionine 1 bears the N-acetylmethionine mark. 2 tandem repeats follow at residues 58–115 and 118–178. Residues 58 to 178 are 2 X approximate tandem repeats; sequence QDVEKIIMPG…AASPGLTQGA (121 aa). Threonine 82 lines the substrate pocket. 2 residues coordinate pyridoxal 5'-phosphate: alanine 148 and serine 149. Histidine 192 provides a ligand contact to substrate. Threonine 246 and asparagine 300 together coordinate pyridoxal 5'-phosphate. The residue at position 303 (lysine 303) is an N6-(pyridoxal phosphate)lysine.

The protein belongs to the group II decarboxylase family. In terms of assembly, homodimer. It depends on pyridoxal 5'-phosphate as a cofactor.

The catalysed reaction is L-dopa + H(+) = dopamine + CO2. It carries out the reaction 5-hydroxy-L-tryptophan + H(+) = serotonin + CO2. It participates in catecholamine biosynthesis; dopamine biosynthesis; dopamine from L-tyrosine: step 2/2. Functionally, catalyzes the decarboxylation of L-3,4-dihydroxyphenylalanine (DOPA) to dopamine and L-5-hydroxytryptophan to serotonin. The chain is Aromatic-L-amino-acid decarboxylase (DDC) from Sus scrofa (Pig).